The chain runs to 270 residues: 3-methyl-2-oxobutanoate hydroxymethyltransferase (270 aa).

Residues D43 and D82 each contribute to the Mg(2+) site. 3-methyl-2-oxobutanoate contacts are provided by residues 43–44, D82, and K112; that span reads DS. E114 serves as a coordination point for Mg(2+). E179 functions as the Proton acceptor in the catalytic mechanism.

This sequence belongs to the PanB family. Homodecamer; pentamer of dimers. The cofactor is Mg(2+).

It is found in the cytoplasm. It catalyses the reaction 3-methyl-2-oxobutanoate + (6R)-5,10-methylene-5,6,7,8-tetrahydrofolate + H2O = 2-dehydropantoate + (6S)-5,6,7,8-tetrahydrofolate. It participates in cofactor biosynthesis; (R)-pantothenate biosynthesis; (R)-pantoate from 3-methyl-2-oxobutanoate: step 1/2. Catalyzes the reversible reaction in which hydroxymethyl group from 5,10-methylenetetrahydrofolate is transferred onto alpha-ketoisovalerate to form ketopantoate. This is 3-methyl-2-oxobutanoate hydroxymethyltransferase from Oceanobacillus iheyensis (strain DSM 14371 / CIP 107618 / JCM 11309 / KCTC 3954 / HTE831).